Consider the following 89-residue polypeptide: Exodeoxyribonuclease 7 small subunit (89 aa).

Positions 1–22 (MRKKSSSNKEETALHPPPENFE) are disordered.

The protein belongs to the XseB family. As to quaternary structure, heterooligomer composed of large and small subunits.

It localises to the cytoplasm. The enzyme catalyses Exonucleolytic cleavage in either 5'- to 3'- or 3'- to 5'-direction to yield nucleoside 5'-phosphates.. Bidirectionally degrades single-stranded DNA into large acid-insoluble oligonucleotides, which are then degraded further into small acid-soluble oligonucleotides. This Nitrosomonas europaea (strain ATCC 19718 / CIP 103999 / KCTC 2705 / NBRC 14298) protein is Exodeoxyribonuclease 7 small subunit.